Here is a 367-residue protein sequence, read N- to C-terminus: MTSTQRTLMVMAGGTGGHVFPGLAVAHRMQAQGWRVVWLGNPAGMEATLVPRHGIPMEYVHFGGLRGKGLATKFALPFNLLRACAQSLRALRRVKPDVVLGMGGYITFPAGLVTVLTGRPLVLHEQNSIAGLTNKVLAKLAKRVLVAFPGALPNAEWTGNPIRTELARTEPPQARYAARSGKLRLLVVGGSLGAAALNEVVPRALALLAPDERPQVVHQAGAKHIDTLKENYEAAGLSCGSDVALVPFIDDMASAYANADLVICRSGAMTVAEIAAVGVAALFVPFPHAVDDHQTTNAEFLAEQGAAVLVQQRDLSAELLADWLRGQSRDSLAAMAERSRSLAKPDATDEVARVCAAVAGANLEGKQ.

Residues 15–17 (TGG), Asn127, Arg163, Ser191, Ile249, and Gln294 each bind UDP-N-acetyl-alpha-D-glucosamine.

It belongs to the glycosyltransferase 28 family. MurG subfamily.

The protein localises to the cell inner membrane. It carries out the reaction di-trans,octa-cis-undecaprenyl diphospho-N-acetyl-alpha-D-muramoyl-L-alanyl-D-glutamyl-meso-2,6-diaminopimeloyl-D-alanyl-D-alanine + UDP-N-acetyl-alpha-D-glucosamine = di-trans,octa-cis-undecaprenyl diphospho-[N-acetyl-alpha-D-glucosaminyl-(1-&gt;4)]-N-acetyl-alpha-D-muramoyl-L-alanyl-D-glutamyl-meso-2,6-diaminopimeloyl-D-alanyl-D-alanine + UDP + H(+). It participates in cell wall biogenesis; peptidoglycan biosynthesis. Cell wall formation. Catalyzes the transfer of a GlcNAc subunit on undecaprenyl-pyrophosphoryl-MurNAc-pentapeptide (lipid intermediate I) to form undecaprenyl-pyrophosphoryl-MurNAc-(pentapeptide)GlcNAc (lipid intermediate II). In Burkholderia pseudomallei (strain 1710b), this protein is UDP-N-acetylglucosamine--N-acetylmuramyl-(pentapeptide) pyrophosphoryl-undecaprenol N-acetylglucosamine transferase.